A 302-amino-acid polypeptide reads, in one-letter code: Heme A synthase (302 aa).

The Cytoplasmic portion of the chain corresponds to 1–8; that stretch reads MFRKQNLK. The helical transmembrane segment at 9 to 29 threads the bilayer; sequence WLGVLATIIMTFVQLGGALVT. Over 30 to 67 the chain is Extracellular; the sequence is KTGSEDGCGSSWPLCNGALLPENLPIQTIIELSHRAVS. A disulfide bridge links cysteine 37 with cysteine 44. Glutamate 60 is a catalytic residue. Histidine 63 lines the heme o pocket. A helical transmembrane segment spans residues 68-88; it reads AISLIVVLWLVITAWKNIGYI. Residues 89-93 are Cytoplasmic-facing; that stretch reads KEIKP. The chain crosses the membrane as a helical span at residues 94-114; it reads LSIISVGFLLVQALVGAAAVI. The Extracellular segment spans residues 115–125; that stretch reads WQQNPYVLALH. Histidine 125 is a binding site for heme o. A helical membrane pass occupies residues 126-146; that stretch reads FGISLISFSSVFLMTLIIFSI. The Cytoplasmic segment spans residues 147-161; that stretch reads DKKYEADILFIHKPL. The helical transmembrane segment at 162–182 threads the bilayer; it reads RILTWLMAIIVYLTIYTGALV. Over 183–215 the chain is Extracellular; it reads RHTKSSLAYGAWPIPFDDIVPHNAHDWVQFSHR. Heme b is bound at residue histidine 214. A helical transmembrane segment spans residues 216 to 236; it reads GMALITFIWIMITFIHAIKNY. Topologically, residues 237–244 are cytoplasmic; it reads SDNRTVRY. A helical transmembrane segment spans residues 245–265; sequence GYTASFILVILQVITGALSVI. Over 266-270 the chain is Extracellular; the sequence is TNVNL. A helical transmembrane segment spans residues 271 to 291; the sequence is IIALFHALFITYLFGMIAYFI. Histidine 276 provides a ligand contact to heme b. Residues 292–302 lie on the Cytoplasmic side of the membrane; sequence LLMLRTTRSQK.

Belongs to the COX15/CtaA family. Type 1 subfamily. In terms of assembly, interacts with CtaB. It depends on heme b as a cofactor.

The protein localises to the cell membrane. The enzyme catalyses Fe(II)-heme o + 2 A + H2O = Fe(II)-heme a + 2 AH2. It functions in the pathway porphyrin-containing compound metabolism; heme A biosynthesis; heme A from heme O: step 1/1. Functionally, catalyzes the conversion of heme O to heme A by two successive hydroxylations of the methyl group at C8. The first hydroxylation forms heme I, the second hydroxylation results in an unstable dihydroxymethyl group, which spontaneously dehydrates, resulting in the formyl group of heme A. The sequence is that of Heme A synthase from Staphylococcus epidermidis (strain ATCC 35984 / DSM 28319 / BCRC 17069 / CCUG 31568 / BM 3577 / RP62A).